The primary structure comprises 100 residues: Cell division topological specificity factor (100 aa).

The protein belongs to the MinE family.

In terms of biological role, prevents the cell division inhibition by proteins MinC and MinD at internal division sites while permitting inhibition at polar sites. This ensures cell division at the proper site by restricting the formation of a division septum at the midpoint of the long axis of the cell. The polypeptide is Cell division topological specificity factor (Synechococcus sp. (strain JA-2-3B'a(2-13)) (Cyanobacteria bacterium Yellowstone B-Prime)).